A 275-amino-acid chain; its full sequence is 1-deoxy-11-beta-hydroxypentalenate dehydrogenase (275 aa).

NAD(+) is bound at residue 12 to 36 (GAASGIGLALSARFARAGAGVVMAD). S144 contributes to the substrate binding site. The active-site Proton acceptor is the Y157. K161 provides a ligand contact to NAD(+).

Belongs to the short-chain dehydrogenases/reductases (SDR) family.

The enzyme catalyses 1-deoxy-11beta-hydroxypentalenate + NAD(+) = 1-deoxy-11-oxopentalenate + NADH + H(+). The protein operates within antibiotic biosynthesis; pentalenolactone biosynthesis. Functionally, catalyzes the oxidation of 1-deoxy-11-beta-hydroxypentalenic acid to 1-deoxy-11-oxopentalenic acid in the biosynthesis of pentalenolactone antibiotic. This Streptomyces exfoliatus (Streptomyces hydrogenans) protein is 1-deoxy-11-beta-hydroxypentalenate dehydrogenase (penF).